The chain runs to 530 residues: Chitin synthase 1 (530 aa).

Asparagine 17 carries N-linked (GlcNAc...) asparagine glycosylation. Residues 22 to 94 (QESSSNLIQQ…QANNNRKVTR (73 aa)) form a disordered region. The segment covering 24 to 56 (SSSNLIQQQQPGTNYARNQQTLSSLRSQKQQAE) has biased composition (polar residues). Residues asparagine 118, asparagine 310, and asparagine 474 are each glycosylated (N-linked (GlcNAc...) asparagine). 2 helical membrane passes run 477–497 (FFAG…GHGF) and 508–528 (IYNV…LSFL).

Belongs to the chitin synthase family. Class II subfamily.

The protein resides in the cell membrane. It carries out the reaction [(1-&gt;4)-N-acetyl-beta-D-glucosaminyl](n) + UDP-N-acetyl-alpha-D-glucosamine = [(1-&gt;4)-N-acetyl-beta-D-glucosaminyl](n+1) + UDP + H(+). Its function is as follows. Polymerizes chitin, a structural polymer of the cell wall and septum, by transferring the sugar moiety of UDP-GlcNAc to the non-reducing end of the growing chitin polymer. The polypeptide is Chitin synthase 1 (Rhizopus delemar (strain RA 99-880 / ATCC MYA-4621 / FGSC 9543 / NRRL 43880) (Mucormycosis agent)).